The primary structure comprises 100 residues: Small ubiquitin-related modifier 1 (100 aa).

The segment covering 1–12 (MSANQEEDKKPG) has biased composition (basic and acidic residues). The disordered stretch occupies residues 1–21 (MSANQEEDKKPGDGGAHINLK). The 78-residue stretch at 16-93 (AHINLKVKGQ…IDAMLHQTGG (78 aa)) folds into the Ubiquitin-like domain. A Glycyl lysine isopeptide (Gly-Lys) (interchain with K-? in acceptor proteins) cross-link involves residue G93.

This sequence belongs to the ubiquitin family. SUMO subfamily. Interacts with SAE2, SCE1, SIZ1 and MMS21. Interacts with HSFA2. Covalently attached to ABI5, FLD, GTE3, HSFA2 and ICE1.

It localises to the nucleus. It is found in the cytoplasm. Functionally, ubiquitin-like protein which can be covalently attached to target lysines as a monomer. Does not seem to be involved in protein degradation and may function as an antagonist of ubiquitin in the degradation process. Required for the massive protein sumoylation in the nucleus induced by heat shock and controlled by SIZ1. Involved in the regulation of the heat stress transcription factor HSFA2 in acquired thermotolerance. The sequence is that of Small ubiquitin-related modifier 1 from Arabidopsis thaliana (Mouse-ear cress).